We begin with the raw amino-acid sequence, 62 residues long: Photosystem II reaction center protein Z (62 aa).

Helical transmembrane passes span Ala-8–Ala-28 and Phe-41–Ile-61.

It belongs to the PsbZ family. As to quaternary structure, PSII is composed of 1 copy each of membrane proteins PsbA, PsbB, PsbC, PsbD, PsbE, PsbF, PsbH, PsbI, PsbJ, PsbK, PsbL, PsbM, PsbT, PsbY, PsbZ, Psb30/Ycf12, at least 3 peripheral proteins of the oxygen-evolving complex and a large number of cofactors. It forms dimeric complexes.

The protein localises to the plastid. It localises to the chloroplast thylakoid membrane. In terms of biological role, may control the interaction of photosystem II (PSII) cores with the light-harvesting antenna, regulates electron flow through the 2 photosystem reaction centers. PSII is a light-driven water plastoquinone oxidoreductase, using light energy to abstract electrons from H(2)O, generating a proton gradient subsequently used for ATP formation. The sequence is that of Photosystem II reaction center protein Z from Citrus sinensis (Sweet orange).